A 321-amino-acid chain; its full sequence is Lipoyl synthase (321 aa).

[4Fe-4S] cluster-binding residues include Cys-68, Cys-73, Cys-79, Cys-94, Cys-98, Cys-101, and Ser-308. One can recognise a Radical SAM core domain in the interval 80 to 297; the sequence is FNHGTATFMI…KVIAEDLGFS (218 aa).

The protein belongs to the radical SAM superfamily. Lipoyl synthase family. Requires [4Fe-4S] cluster as cofactor.

The protein resides in the cytoplasm. The catalysed reaction is [[Fe-S] cluster scaffold protein carrying a second [4Fe-4S](2+) cluster] + N(6)-octanoyl-L-lysyl-[protein] + 2 oxidized [2Fe-2S]-[ferredoxin] + 2 S-adenosyl-L-methionine + 4 H(+) = [[Fe-S] cluster scaffold protein] + N(6)-[(R)-dihydrolipoyl]-L-lysyl-[protein] + 4 Fe(3+) + 2 hydrogen sulfide + 2 5'-deoxyadenosine + 2 L-methionine + 2 reduced [2Fe-2S]-[ferredoxin]. It participates in protein modification; protein lipoylation via endogenous pathway; protein N(6)-(lipoyl)lysine from octanoyl-[acyl-carrier-protein]: step 2/2. Functionally, catalyzes the radical-mediated insertion of two sulfur atoms into the C-6 and C-8 positions of the octanoyl moiety bound to the lipoyl domains of lipoate-dependent enzymes, thereby converting the octanoylated domains into lipoylated derivatives. The sequence is that of Lipoyl synthase from Shewanella amazonensis (strain ATCC BAA-1098 / SB2B).